A 165-amino-acid chain; its full sequence is Large ribosomal subunit protein uL10 (165 aa).

The protein belongs to the universal ribosomal protein uL10 family. In terms of assembly, part of the ribosomal stalk of the 50S ribosomal subunit. The N-terminus interacts with L11 and the large rRNA to form the base of the stalk. The C-terminus forms an elongated spine to which L12 dimers bind in a sequential fashion forming a multimeric L10(L12)X complex.

Its function is as follows. Forms part of the ribosomal stalk, playing a central role in the interaction of the ribosome with GTP-bound translation factors. This Burkholderia cenocepacia (strain HI2424) protein is Large ribosomal subunit protein uL10.